The chain runs to 855 residues: Putative AAA family ATPase R476 (855 aa).

Residues 1-13 are compositionally biased toward basic and acidic residues; it reads MNKRDFSELKNSE. Positions 1-37 are disordered; it reads MNKRDFSELKNSESSEESSLVSSTETVRSSKRNKKFH. The span at 17-27 shows a compositional bias: low complexity; the sequence is ESSLVSSTETV. 610-617 contacts ATP; it reads GPPGTGKT.

This sequence belongs to the AAA ATPase family.

The chain is Putative AAA family ATPase R476 from Acanthamoeba polyphaga mimivirus (APMV).